Reading from the N-terminus, the 100-residue chain is uncharacterized protein (100 aa).

Residues 13–32 traverse the membrane as a helical segment; sequence IWSSLNIICLMVTFLNVQLS.

The protein resides in the mitochondrion membrane. This is an uncharacterized protein from Schizosaccharomyces pombe (strain 972 / ATCC 24843) (Fission yeast).